The sequence spans 345 residues: Membrane progestin receptor alpha (345 aa).

At 1 to 74 (MAMAVAQKFN…FQRHNEAVNV (74 aa)) the chain is on the cytoplasmic side. The helical transmembrane segment at 75 to 95 (WTHLLAALALLLRLIGLAASV) threads the bilayer. Topologically, residues 96 to 102 (DFREDPH) are extracellular. The helical transmembrane segment at 103–123 (ALPLFFIVLASFTYLSFSAVA) threads the bilayer. Over 124-136 (HLLQAKSEFWHYS) the chain is Cytoplasmic. A helical membrane pass occupies residues 137–157 (FFFLDYVGVAVYQFGSALAHF). The Extracellular segment spans residues 158–168 (YYAIEPSWHDK). A helical membrane pass occupies residues 169 to 189 (VQAIFLPTAAFLAWLSCAGSC). Over 190–243 (YNKYSQKPGLLGRIFQEAPSALAYVLDISPVLHRIIVSPLPAEEDPALLYHKCQ) the chain is Cytoplasmic. A helical transmembrane segment spans residues 244–264 (VVFFLLAAAFFSTVMPESWFP). Over 265 to 268 (GSCH) the chain is Extracellular. The chain crosses the membrane as a helical span at residues 269–289 (IFGQGHQVFHVFLVLCTLAQL). Residues 290–315 (EAVTLDYQARRGIYEPLHARWPHNFS) lie on the Cytoplasmic side of the membrane. Residues 316–336 (GLFLLTVASSSLTALLLSQLV) form a helical membrane-spanning segment. Topologically, residues 337–345 (RRKLHQKTK) are extracellular.

Belongs to the ADIPOR family. As to expression, detected in most adult tissues. Higher expression found in white fat and liver than brown fat and skeletal muscle.

It localises to the cell membrane. Its function is as follows. Plasma membrane progesterone (P4) receptor coupled to G proteins. Seems to act through a G(i) mediated pathway. May be involved in oocyte maturation. Involved in neurosteroid inhibition of apoptosis. Also binds dehydroepiandrosterone (DHEA), pregnanolone, pregnenolone and allopregnanolone. The protein is Membrane progestin receptor alpha of Mus musculus (Mouse).